An 80-amino-acid chain; its full sequence is HssA/B-like protein 2 (80 aa).

The disordered stretch occupies residues 1-29 (MSLLSALTSISKPMNTSSKSSVSSKNVSG). The segment covering 9–29 (SISKPMNTSSKSSVSSKNVSG) has biased composition (low complexity).

Belongs to the hssA/B family.

The sequence is that of HssA/B-like protein 2 (hssl2) from Dictyostelium discoideum (Social amoeba).